The primary structure comprises 77 residues: Acyl carrier protein (77 aa).

The Carrier domain occupies 2-77 (ADTLERVTKI…DAVNYIQNQQ (76 aa)). S37 carries the post-translational modification O-(pantetheine 4'-phosphoryl)serine.

This sequence belongs to the acyl carrier protein (ACP) family. In terms of processing, 4'-phosphopantetheine is transferred from CoA to a specific serine of apo-ACP by AcpS. This modification is essential for activity because fatty acids are bound in thioester linkage to the sulfhydryl of the prosthetic group.

The protein resides in the cytoplasm. Its pathway is lipid metabolism; fatty acid biosynthesis. In terms of biological role, carrier of the growing fatty acid chain in fatty acid biosynthesis. This chain is Acyl carrier protein (acpA), found in Bacillus subtilis (strain 168).